The chain runs to 156 residues: Small ribosomal subunit protein uS7 (156 aa).

Belongs to the universal ribosomal protein uS7 family. As to quaternary structure, part of the 30S ribosomal subunit. Contacts proteins S9 and S11.

In terms of biological role, one of the primary rRNA binding proteins, it binds directly to 16S rRNA where it nucleates assembly of the head domain of the 30S subunit. Is located at the subunit interface close to the decoding center, probably blocks exit of the E-site tRNA. The polypeptide is Small ribosomal subunit protein uS7 (Prochlorococcus marinus (strain MIT 9312)).